We begin with the raw amino-acid sequence, 478 residues long: Cytochrome c-552 (478 aa).

The signal sequence occupies residues 1–26 (MARTILRARRFFSLILPFFFISSVYA). His-94 contributes to the heme c binding site. Cys-122, Cys-125, and Lys-126 together coordinate heme. 6 residues coordinate heme c: Cys-160, Cys-163, His-164, Cys-209, Cys-212, and His-213. Residues Glu-215, Tyr-216, Lys-261, and Gln-263 each contribute to the Ca(2+) site. Tyr-216 serves as a coordination point for substrate. Residue His-264 coordinates substrate. Heme c-binding residues include His-275, Cys-282, Cys-285, His-286, His-301, Cys-314, Cys-317, His-318, and His-393.

This sequence belongs to the cytochrome c-552 family. It depends on Ca(2+) as a cofactor. Heme c serves as cofactor.

Its subcellular location is the periplasm. It catalyses the reaction 6 Fe(III)-[cytochrome c] + NH4(+) + 2 H2O = 6 Fe(II)-[cytochrome c] + nitrite + 8 H(+). It functions in the pathway nitrogen metabolism; nitrate reduction (assimilation). Catalyzes the reduction of nitrite to ammonia, consuming six electrons in the process. This Citrobacter koseri (strain ATCC BAA-895 / CDC 4225-83 / SGSC4696) protein is Cytochrome c-552.